We begin with the raw amino-acid sequence, 879 residues long: Phosphoenolpyruvate carboxylase (879 aa).

Residues His138 and Lys545 contribute to the active site.

This sequence belongs to the PEPCase type 1 family. Mg(2+) serves as cofactor.

It catalyses the reaction oxaloacetate + phosphate = phosphoenolpyruvate + hydrogencarbonate. In terms of biological role, forms oxaloacetate, a four-carbon dicarboxylic acid source for the tricarboxylic acid cycle. In Haemophilus influenzae (strain 86-028NP), this protein is Phosphoenolpyruvate carboxylase.